The primary structure comprises 67 residues: Kappa-conotoxin-like 2 (67 aa).

An N-terminal signal peptide occupies residues 1–26 (MMFRLTSVSCFLLVIACLNLFQVVLT). 4 cysteine pairs are disulfide-bonded: cysteine 29–cysteine 43, cysteine 36–cysteine 48, cysteine 42–cysteine 51, and cysteine 47–cysteine 55. Phenylalanine 59 is modified (phenylalanine amide). The propeptide occupies 63 to 67 (ATFQE).

This sequence belongs to the conotoxin I2 superfamily. As to expression, expressed by the venom duct.

The protein localises to the secreted. Its function is as follows. Inhibits the vertebrate voltage-gated potassium channels Kv1.1/KCNA1 and Kv1.3/KCNA3. This Conus vexillum (Flag cone) protein is Kappa-conotoxin-like 2.